Here is a 980-residue protein sequence, read N- to C-terminus: Valine--tRNA ligase (980 aa).

A 'HIGH' region motif is present at residues 43 to 53 (PNVTGTLHMGH). Positions 586–590 (KMSKS) match the 'KMSKS' region motif. ATP is bound at residue lysine 589. Residues 914 to 978 (LVDMDAERTR…QLTGLREQRA (65 aa)) are a coiled coil.

Belongs to the class-I aminoacyl-tRNA synthetase family. ValS type 1 subfamily. In terms of assembly, monomer.

The protein resides in the cytoplasm. It catalyses the reaction tRNA(Val) + L-valine + ATP = L-valyl-tRNA(Val) + AMP + diphosphate. In terms of biological role, catalyzes the attachment of valine to tRNA(Val). As ValRS can inadvertently accommodate and process structurally similar amino acids such as threonine, to avoid such errors, it has a 'posttransfer' editing activity that hydrolyzes mischarged Thr-tRNA(Val) in a tRNA-dependent manner. This chain is Valine--tRNA ligase, found in Xanthomonas euvesicatoria pv. vesicatoria (strain 85-10) (Xanthomonas campestris pv. vesicatoria).